Here is an 823-residue protein sequence, read N- to C-terminus: Dolichyl-diphosphooligosaccharide--protein glycosyltransferase subunit STT3B (823 aa).

The disordered stretch occupies residues 1–58; sequence MAEPSAPESKHKSSLNSSPWSGLMALGNSRHGHHGPGTQSASSAAAPKPGPPAGLSGG. N-acetylalanine is present on Ala-2. Residues 2–41 lie on the Cytoplasmic side of the membrane; the sequence is AEPSAPESKHKSSLNSSPWSGLMALGNSRHGHHGPGTQSA. A phosphoserine mark is found at Ser-13, Ser-18, and Ser-29. The helical transmembrane segment at 42 to 83 threads the bilayer; that stretch reads SSAAAPKPGPPAGLSGGLSQPAGWQSLLSFTILFLAWLAGFS. The Lumenal portion of the chain corresponds to 84–170; sequence SRLFAVIRFE…VHIRDVCVFL (87 aa). The DXD motif 1 motif lies at 98-100; the sequence is EFD. Asp-100 contacts Mn(2+). Residues 171–189 form a helical membrane-spanning segment; it reads APTFSGLTSISTFLLTREL. Residues 190-191 lie on the Cytoplasmic side of the membrane; it reads WN. Residues 192 to 209 traverse the membrane as a helical segment; that stretch reads QGAGLLAACFIAIVPGYI. Topologically, residues 210–220 are lumenal; sequence SRSVAGSFDNE. Asp-218 and Glu-220 together coordinate Mn(2+). The short motif at 218–220 is the DXD motif 2 element; that stretch reads DNE. Residues 221–240 traverse the membrane as a helical segment; the sequence is GIAIFALQFTYYLWVKSVKT. Residues 241–242 are Cytoplasmic-facing; sequence GS. A helical transmembrane segment spans residues 243–257; the sequence is VFWTMCCCLSYFYMV. At 258-262 the chain is on the lumenal side; it reads SAWGG. A helical membrane pass occupies residues 263–279; that stretch reads YVFIINLIPLHVFVLLL. Residues 280-284 are Cytoplasmic-facing; it reads MQRYS. Residues 285–310 traverse the membrane as a helical segment; it reads KRVYIAYSTFYIVGLILSMQIPFVGF. Residues 311–318 are Lumenal-facing; that stretch reads QPIRTSEH. Residues 319 to 338 form a helical membrane-spanning segment; the sequence is MAAAGVFALLQAYAFLQYLR. Topologically, residues 339 to 347 are cytoplasmic; that stretch reads DRLTKQEFQ. Residues 348 to 368 form a helical membrane-spanning segment; it reads TLFFLGVSLAAGAVFLSVIYL. The Lumenal portion of the chain corresponds to 369–407; it reads TYTGYIAPWSGRFYSLWDTGYAKIHIPIIASVSEHQPTT. The SVSE motif motif lies at 399–402; that stretch reads SVSE. Residues 408–430 traverse the membrane as a helical segment; the sequence is WVSFFFDLHILVCTFPAGLWFCI. The Cytoplasmic segment spans residues 431-436; it reads KNINDE. A helical membrane pass occupies residues 437-453; it reads RVFVALYAISAVYFAGV. At 454–457 the chain is on the lumenal side; that stretch reads MVRL. Arg-456 serves as a coordination point for dolichyl diphosphooligosaccharide. Residues 458 to 479 traverse the membrane as a helical segment; that stretch reads MLTLTPVVCMLSAIAFSNVFEH. At 480–523 the chain is on the cytoplasmic side; sequence YLGDDMKRENPPVEDSSDEDDKRNPGNLYDKAGKVRKHVTEQEK. The segment at 487 to 526 is disordered; the sequence is RENPPVEDSSDEDDKRNPGNLYDKAGKVRKHVTEQEKPEE. Residues Ser-495 and Ser-496 each carry the phosphoserine modification. A compositionally biased stretch (basic and acidic residues) spans 517–526; it reads HVTEQEKPEE. A helical membrane pass occupies residues 524–549; sequence PEEGLGPNIKSIVTMLMLMLLMMFAV. Residues 550–823 are Lumenal-facing; it reads HCTWVTSNAY…KGKKTSKKTV (274 aa). An interacts with target acceptor peptide in protein substrate region spans residues 601–603; sequence WWD. The short motif at 601–605 is the WWDYG motif element; the sequence is WWDYG. Tyr-606 contributes to the dolichyl diphosphooligosaccharide binding site. N-linked (GlcNAc...) asparagine glycans are attached at residues Asn-613 and Asn-620. An N-linked (GlcNAc...) (high mannose) asparagine glycan is attached at Asn-624. An N-linked (GlcNAc...) asparagine glycan is attached at Asn-638. A DK motif motif is present at residues 668-675; that stretch reads DINKFLWM.

It belongs to the STT3 family. In terms of assembly, component of the oligosaccharyltransferase (OST) complex. There are 2 OST complexes, OST-A and OST-B, which contain STT3A or STT3B as catalytic subunit, respectively. OST-A and OST-B contain common core subunits RPN1, RPN2, OST48, OST4, DAD1 and TMEM258, and OST-B contains either MAGT1 or TUSC3 as specific accessory subunit. Mg(2+) is required as a cofactor. Requires Mn(2+) as cofactor.

Its subcellular location is the endoplasmic reticulum membrane. It carries out the reaction a di-trans,poly-cis-dolichyl diphosphooligosaccharide + L-asparaginyl-[protein] = N(4)-(oligosaccharide-(1-&gt;4)-N-acetyl-beta-D-glucosaminyl-(1-&gt;4)-N-acetyl-beta-D-glucosaminyl)-L-asparaginyl-[protein] + a di-trans,poly-cis-dolichyl diphosphate + H(+). The protein operates within protein modification; protein glycosylation. Functionally, catalytic subunit of the oligosaccharyl transferase (OST) complex that catalyzes the initial transfer of a defined glycan (Glc(3)Man(9)GlcNAc(2) in eukaryotes) from the lipid carrier dolichol-pyrophosphate to an asparagine residue within an Asn-X-Ser/Thr consensus motif in nascent polypeptide chains, the first step in protein N-glycosylation. N-glycosylation occurs cotranslationally and the complex associates with the Sec61 complex at the channel-forming translocon complex that mediates protein translocation across the endoplasmic reticulum (ER). All subunits are required for a maximal enzyme activity. This subunit contains the active site and the acceptor peptide and donor lipid-linked oligosaccharide (LLO) binding pockets. STT3B is present in a small subset of OST complexes and mediates both cotranslational and post-translational N-glycosylation of target proteins: STT3B-containing complexes are required for efficient post-translational glycosylation and while they are less competent than STT3A-containing complexes for cotranslational glycosylation, they have the ability to mediate glycosylation of some nascent sites that are not accessible for STT3A. STT3B-containing complexes also act post-translationally and mediate modification of skipped glycosylation sites in unfolded proteins. Plays a role in ER-associated degradation (ERAD) pathway that mediates ubiquitin-dependent degradation of misfolded endoplasmic reticulum proteins by mediating N-glycosylation of unfolded proteins, which are then recognized by the ERAD pathway and targeted for degradation. This chain is Dolichyl-diphosphooligosaccharide--protein glycosyltransferase subunit STT3B, found in Mus musculus (Mouse).